The sequence spans 71 residues: Large ribosomal subunit protein bL31 (71 aa).

The Zn(2+) site is built by Cys-16, Cys-18, Cys-37, and Cys-40.

Belongs to the bacterial ribosomal protein bL31 family. Type A subfamily. As to quaternary structure, part of the 50S ribosomal subunit. Zn(2+) serves as cofactor.

Its function is as follows. Binds the 23S rRNA. The polypeptide is Large ribosomal subunit protein bL31 (Serratia proteamaculans (strain 568)).